Here is a 335-residue protein sequence, read N- to C-terminus: Deoxyhypusine hydroxylase (335 aa).

HEAT-like PBS-type repeat units follow at residues 71-97 (LKHE…VVKD), 104-130 (CRHE…LRDN), 200-233 (QRYR…GLKD), 238-264 (FRHE…ALSD), and 271-298 (VRHE…FLND). Fe cation is bound by residues histidine 73, glutamate 74, histidine 106, and glutamate 107. Residues histidine 240, glutamate 241, histidine 273, and glutamate 274 each contribute to the Fe cation site.

It belongs to the deoxyhypusine hydroxylase family. Requires Fe(2+) as cofactor.

Its subcellular location is the cytoplasm. It localises to the nucleus. It carries out the reaction [eIF5A protein]-deoxyhypusine + AH2 + O2 = [eIF5A protein]-hypusine + A + H2O. The protein operates within protein modification; eIF5A hypusination. Its function is as follows. Catalyzes the hydroxylation of the N(6)-(4-aminobutyl)-L-lysine intermediate to form hypusine, an essential post-translational modification only found in mature eIF-5A factor. The chain is Deoxyhypusine hydroxylase (lia1) from Aspergillus clavatus (strain ATCC 1007 / CBS 513.65 / DSM 816 / NCTC 3887 / NRRL 1 / QM 1276 / 107).